The sequence spans 727 residues: Cadmium-transporting ATPase (727 aa).

The 64-residue stretch at 12 to 75 folds into the HMA domain; sequence EMNVYRVQGF…AGAFENLKVS (64 aa). Residues Cys23 and Cys26 each coordinate Cd(2+). A run of 5 helical transmembrane segments spans residues 106-126, 130-150, 171-191, 336-356, and 364-384; these read STLLFATLLIAFGYLSHFVNG, LVTSMLFVGSIVIGGYSLFKV, IGATIIGKWAEASIVVILFAI, IIMVIAALVAVVPPLFFGGSW, and LAVLVVGCPCALVISTPISIV. Asp415 serves as the catalytic 4-aspartylphosphate intermediate. The next 2 membrane-spanning stretches (helical) occupy residues 672–694 and 699–721; these read LNIIKANITFAIGIKIIALLLVI and TLWIAILSDMGATILVALNSLRL.

It belongs to the cation transport ATPase (P-type) (TC 3.A.3) family. Type IB subfamily.

The protein localises to the cell membrane. It carries out the reaction Cd(2+)(in) + ATP + H2O = Cd(2+)(out) + ADP + phosphate + H(+). Inhibited by the antibiotic bafilomycin A1. Partially inhibited by DCCD, nigericin and FCCP. Its function is as follows. Couples the hydrolysis of ATP with the export of cadmium. Involved in cadmium resistance. This is Cadmium-transporting ATPase from Staphylococcus aureus.